The primary structure comprises 142 residues: Large-conductance mechanosensitive channel (142 aa).

Helical transmembrane passes span 10–30 and 86–106; these read FAIK…AAFS and GNFI…FLMV.

Belongs to the MscL family. Homopentamer.

Its subcellular location is the cell inner membrane. Its function is as follows. Channel that opens in response to stretch forces in the membrane lipid bilayer. May participate in the regulation of osmotic pressure changes within the cell. The chain is Large-conductance mechanosensitive channel from Polaromonas naphthalenivorans (strain CJ2).